Consider the following 197-residue polypeptide: Translation machinery-associated protein 22 (197 aa).

Residues 102 to 173 (VQIKRVERNK…DVKEWLLEVY (72 aa)) enclose the SUI1 domain.

It belongs to the DENR family. As to quaternary structure, interacts with the 40S ribosomal subunit.

It localises to the cytoplasm. In Aspergillus niger (strain ATCC MYA-4892 / CBS 513.88 / FGSC A1513), this protein is Translation machinery-associated protein 22 (tma22).